We begin with the raw amino-acid sequence, 480 residues long: Proline--tRNA ligase (480 aa).

It belongs to the class-II aminoacyl-tRNA synthetase family. ProS type 3 subfamily. As to quaternary structure, homodimer.

It is found in the cytoplasm. The catalysed reaction is tRNA(Pro) + L-proline + ATP = L-prolyl-tRNA(Pro) + AMP + diphosphate. Catalyzes the attachment of proline to tRNA(Pro) in a two-step reaction: proline is first activated by ATP to form Pro-AMP and then transferred to the acceptor end of tRNA(Pro). In Pyrococcus horikoshii (strain ATCC 700860 / DSM 12428 / JCM 9974 / NBRC 100139 / OT-3), this protein is Proline--tRNA ligase.